A 149-amino-acid polypeptide reads, in one-letter code: Ribosome-binding factor A (149 aa).

The segment at 125–149 is disordered; that stretch reads FGSADEVLNEDEGATDDTDDTKGKD. A compositionally biased stretch (acidic residues) spans 131–143; that stretch reads VLNEDEGATDDTD.

It belongs to the RbfA family. In terms of assembly, monomer. Binds 30S ribosomal subunits, but not 50S ribosomal subunits or 70S ribosomes.

Its subcellular location is the cytoplasm. Its function is as follows. One of several proteins that assist in the late maturation steps of the functional core of the 30S ribosomal subunit. Associates with free 30S ribosomal subunits (but not with 30S subunits that are part of 70S ribosomes or polysomes). Required for efficient processing of 16S rRNA. May interact with the 5'-terminal helix region of 16S rRNA. This Shewanella sp. (strain W3-18-1) protein is Ribosome-binding factor A.